A 1535-amino-acid polypeptide reads, in one-letter code: CLIP-associating protein 1 (1535 aa).

2 HEAT repeats span residues 87–124 and 163–200; these read AQIG…QAAN and LTLS…HVGE. The segment at 237–290 is disordered; it reads NEKNFDDEDSVDGNRPSSASSSSSKAPSSSRRNVNLGTTRRLMSSSLGSKSSAA. Ser-246 is modified (phosphoserine). The segment covering 252 to 266 has biased composition (low complexity); that stretch reads PSSASSSSSKAPSSS. Positions 267–279 are enriched in polar residues; sequence RRNVNLGTTRRLM. A compositionally biased stretch (low complexity) spans 280–290; that stretch reads SSSLGSKSSAA. HEAT repeat units lie at residues 405–440 and 441–477; these read HGAE…IRHT and HIPR…EWQT. Disordered stretches follow at residues 543-600 and 612-782; these read SDSI…RSRS and SKVS…GRIP. Phosphoserine occurs at positions 545, 548, 558, 559, and 568. The span at 548–567 shows a compositional bias: low complexity; sequence SLPQSDRSSSSSQESLNRPL. Low complexity predominate over residues 579–594; sequence SRGSTVSTKSVSTTGS. Residue Ser-600 is modified to Phosphoserine. Positions 612 to 633 are enriched in low complexity; that stretch reads SKVSSSSGSPAFSSAAALPPGS. A phosphoserine mark is found at Ser-636, Ser-646, Ser-647, and Ser-649. Residues 645–658 are compositionally biased toward polar residues; that stretch reads QSSGSTTNVASTPD. At Thr-656 the chain carries Phosphothreonine. Positions 662-782 are interaction with microtubules, MAPRE1 and MAPRE3; that stretch reads RSRAKVVSQS…FGLGQSGRIP (121 aa). Low complexity predominate over residues 673-695; it reads RSRSANPAGAGSRSSSPGKLLGS. 4 positions are modified to phosphoserine: Ser-684, Ser-688, Ser-695, and Ser-702. Thr-708 is modified (phosphothreonine). A Phosphoserine modification is found at Ser-711. The segment covering 721 to 730 has biased composition (polar residues); it reads QGCSRETSPN. 3 positions are modified to phosphoserine: Ser-784, Ser-794, and Ser-820. The HEAT 5 repeat unit spans residues 971 to 1008; that stretch reads QQFNILMRFIVDQTQTPNLKVKVAILKYIESLARQMDP. Residues 1078 to 1157 are disordered; the sequence is LKNSSNTGVG…APSHKTLRRS (80 aa). Residues 1079-1094 show a composition bias toward polar residues; sequence KNSSNTGVGSPSNTIG. The residue at position 1088 (Ser-1088) is a Phosphoserine. A phosphothreonine mark is found at Thr-1092 and Thr-1096. Residues 1103-1112 show a composition bias toward low complexity; the sequence is SRTSPLTSPT. Ser-1110, Phe-1139, and Ser-1193 each carry phosphoserine. The segment covering 1200–1213 has biased composition (basic and acidic residues); it reads PIKRDGKKDCDIVS. Disordered stretches follow at residues 1200-1233 and 1245-1266; these read PIKR…EIEG and LNTQ…PYPY. Ser-1220 carries the post-translational modification Phosphoserine. An interaction with CLIP2 and RSN region spans residues 1251–1535; sequence RAFPGPRARE…SSSSDVSTHS (285 aa). Residues 1251-1535 form an interaction with PHLDB2 region; sequence RAFPGPRARE…SSSSDVSTHS (285 aa). A localization to kinetochores region spans residues 1253–1535; the sequence is FPGPRAREYN…SSSSDVSTHS (283 aa). Positions 1296–1327 form a coiled coil; sequence DHSDLVADLLKELSNHNERVEERKGALLELLK. 2 HEAT repeats span residues 1339–1376 and 1457–1494; these read EHFK…NQPA and QLLV…VIGE.

Belongs to the CLASP family. Interacts with ERC1, MAPRE1, MAPRE3, microtubules, and PHLDB2. The interaction with ERC1 may be mediated by PHLDB2. Interacts with GCC2; recruits CLASP1 to Golgi membranes. Interacts with CLIP2 and RSN. Interacts with MACF1. Interacts with mtcl2 and MTCL1. In terms of tissue distribution, highly expressed in brain and heart and at lower levels in kidney, lung, skeletal muscle and testis.

The protein localises to the cytoplasm. Its subcellular location is the cytoskeleton. It is found in the microtubule organizing center. It localises to the centrosome. The protein resides in the chromosome. The protein localises to the centromere. Its subcellular location is the kinetochore. It is found in the spindle. It localises to the golgi apparatus. The protein resides in the trans-Golgi network. In terms of biological role, microtubule plus-end tracking protein that promotes the stabilization of dynamic microtubules. Involved in the nucleation of noncentrosomal microtubules originating from the trans-Golgi network (TGN). Required for the polarization of the cytoplasmic microtubule arrays in migrating cells towards the leading edge of the cell. May act at the cell cortex to enhance the frequency of rescue of depolymerizing microtubules by attaching their plus-ends to cortical platforms composed of ERC1 and PHLDB2. This cortical microtubule stabilizing activity is regulated at least in part by phosphatidylinositol 3-kinase signaling. Also performs a similar stabilizing function at the kinetochore which is essential for the bipolar alignment of chromosomes on the mitotic spindle. This Mus musculus (Mouse) protein is CLIP-associating protein 1 (Clasp1).